The chain runs to 174 residues: Protein PopB (174 aa).

The segment at 1–174 (MSHSKIKAGG…EAMKIKDDDD (174 aa)) is disordered. Over residues 50–65 (LNKSNLGSDSQTWTPG) the composition is skewed to polar residues. Residues 66-78 (STMVSLKSRSSSS) are compositionally biased toward low complexity. Over residues 79-89 (HKPDTGGDTKP) the composition is skewed to basic and acidic residues. The span at 147–161 (IALQRAIQRQTQTRQ) shows a compositional bias: low complexity. Residues 162–174 (KMQEAMKIKDDDD) are compositionally biased toward basic and acidic residues.

It localises to the secreted. Its function is as follows. Probably involved in host-pathogen interactions. This Ralstonia nicotianae (strain ATCC BAA-1114 / GMI1000) (Ralstonia solanacearum) protein is Protein PopB (popB).